Here is a 559-residue protein sequence, read N- to C-terminus: Probable inorganic carbon transporter subunit DabB1 (559 aa).

Transmembrane regions (helical) follow at residues 4 to 24 (LQWL…LFAA), 33 to 53 (LSVA…VAYI), 76 to 96 (LSSI…VYSI), 106 to 126 (PRFF…VAAG), 173 to 193 (LVLA…PTLF), 202 to 222 (ATIM…LSAF), 240 to 260 (GPTP…GFII), 273 to 293 (VLHM…VLML), 310 to 330 (MGFM…FHLI), 375 to 395 (LPWL…LVIA), 408 to 428 (GAIV…FATH), 440 to 460 (MMIL…GHAF), and 487 to 507 (GLVF…YLAS).

Belongs to the inorganic carbon transporter (TC 9.A.2) DabB family. As to quaternary structure, forms a complex with DabA1.

The protein resides in the cell inner membrane. In terms of biological role, part of an energy-coupled inorganic carbon pump. The chain is Probable inorganic carbon transporter subunit DabB1 from Halothiobacillus neapolitanus (strain ATCC 23641 / c2) (Thiobacillus neapolitanus).